The following is a 411-amino-acid chain: Serine hydroxymethyltransferase (411 aa).

(6S)-5,6,7,8-tetrahydrofolate contacts are provided by residues L119 and 123-125 (GHL). At K228 the chain carries N6-(pyridoxal phosphate)lysine. Residue 351 to 353 (SPF) coordinates (6S)-5,6,7,8-tetrahydrofolate.

The protein belongs to the SHMT family. As to quaternary structure, homodimer. Requires pyridoxal 5'-phosphate as cofactor.

The protein resides in the cytoplasm. The enzyme catalyses (6R)-5,10-methylene-5,6,7,8-tetrahydrofolate + glycine + H2O = (6S)-5,6,7,8-tetrahydrofolate + L-serine. It functions in the pathway one-carbon metabolism; tetrahydrofolate interconversion. It participates in amino-acid biosynthesis; glycine biosynthesis; glycine from L-serine: step 1/1. Its function is as follows. Catalyzes the reversible interconversion of serine and glycine with tetrahydrofolate (THF) serving as the one-carbon carrier. This reaction serves as the major source of one-carbon groups required for the biosynthesis of purines, thymidylate, methionine, and other important biomolecules. Also exhibits THF-independent aldolase activity toward beta-hydroxyamino acids, producing glycine and aldehydes, via a retro-aldol mechanism. The polypeptide is Serine hydroxymethyltransferase (Clostridium botulinum (strain Alaska E43 / Type E3)).